Reading from the N-terminus, the 884-residue chain is Telomerase reverse transcriptase (884 aa).

A Reverse transcriptase domain is found at 422–725 (CRNHNSYTLS…TVIQFCAMHI (304 aa)). Residues Asp530, Asp670, and Asp671 each contribute to the Mg(2+) site.

It belongs to the reverse transcriptase family. Telomerase subfamily. As to quaternary structure, catalytic subunit of the telomerase holoenzyme complex composed minimally of EST2 and the telomerase RNA template component.

It is found in the nucleus. The protein localises to the chromosome. Its subcellular location is the telomere. It carries out the reaction DNA(n) + a 2'-deoxyribonucleoside 5'-triphosphate = DNA(n+1) + diphosphate. In terms of biological role, telomerase is a ribonucleoprotein enzyme essential for the replication of chromosome termini in most eukaryotes. It elongates telomeres. It is a reverse transcriptase that adds simple sequence repeats to chromosome ends by copying a template sequence within the RNA component of the enzyme. The polypeptide is Telomerase reverse transcriptase (EST2) (Saccharomyces cerevisiae (strain ATCC 204508 / S288c) (Baker's yeast)).